The following is a 178-amino-acid chain: Long polar fimbria protein A (178 aa).

Residues 1–24 form the signal peptide; that stretch reads MEFLMKKVVFALSALAVVSTSAFA.

This sequence belongs to the fimbrial protein family.

The protein resides in the fimbrium. The polypeptide is Long polar fimbria protein A (lpfA) (Salmonella typhimurium (strain LT2 / SGSC1412 / ATCC 700720)).